Consider the following 120-residue polypeptide: uncharacterized protein (120 aa).

This is an uncharacterized protein from Archaeoglobus fulgidus (strain ATCC 49558 / DSM 4304 / JCM 9628 / NBRC 100126 / VC-16).